The following is a 170-amino-acid chain: Ribosome maturation factor RimM (170 aa).

The region spanning 98–170 is the PRC barrel domain; it reads PDEYYWVDLE…LIVVDWDPDF (73 aa).

The protein belongs to the RimM family. In terms of assembly, binds ribosomal protein uS19.

The protein resides in the cytoplasm. Its function is as follows. An accessory protein needed during the final step in the assembly of 30S ribosomal subunit, possibly for assembly of the head region. Essential for efficient processing of 16S rRNA. May be needed both before and after RbfA during the maturation of 16S rRNA. It has affinity for free ribosomal 30S subunits but not for 70S ribosomes. The protein is Ribosome maturation factor RimM of Xanthomonas axonopodis pv. citri (strain 306).